Consider the following 445-residue polypeptide: MLTYKVSPSSVYGNAFIPSSKSHTLRAILWASVAEGKSIIYNYLDSPDTEAMICACKQMGASIKKFPQILEIVGNPLAIFPKYTLIDAGNSGIVLRFMTALACVFSKEITVTGSSQLQRRPMAPLLQALRNFGASFHFSSDKSVLPFTMSGPLRSAYSDVEGSDSQFASALAVACSLAEGPCSFTIIEPKERPWFDLSLWWLEKLHLPYSCSDTTYSFPGSSHPQGFSYHVTGDFSSAAFIAAAALLSKSLQPIRLRNLDILDIQGDKIFFSLMQNLGASIQYDNEEILVFPSSFSGGSIDMDGCIDALPILTVLCCFADSPSHLYNARSAKDKESDRILAITEELQKMGACIQPTHDGLLVNPSPLYGAVLDSHDDHRIAMALTIAALYASGDSRIHNTACVRKTFPNFVQTLNIMEARIEECHDNYSMWSTHKRKVFARESFG.

3-phosphoshikimate contacts are provided by K21, S22, and R26. Residue K21 coordinates phosphoenolpyruvate. Residues G92 and R120 each contribute to the phosphoenolpyruvate site. S165, Q166, D307, and K334 together coordinate 3-phosphoshikimate. Q166 lines the phosphoenolpyruvate pocket. The Proton acceptor role is filled by D307. Residues R338, R379, and K405 each coordinate phosphoenolpyruvate.

It belongs to the EPSP synthase family. As to quaternary structure, monomer.

The protein localises to the cytoplasm. The catalysed reaction is 3-phosphoshikimate + phosphoenolpyruvate = 5-O-(1-carboxyvinyl)-3-phosphoshikimate + phosphate. It functions in the pathway metabolic intermediate biosynthesis; chorismate biosynthesis; chorismate from D-erythrose 4-phosphate and phosphoenolpyruvate: step 6/7. Catalyzes the transfer of the enolpyruvyl moiety of phosphoenolpyruvate (PEP) to the 5-hydroxyl of shikimate-3-phosphate (S3P) to produce enolpyruvyl shikimate-3-phosphate and inorganic phosphate. The protein is 3-phosphoshikimate 1-carboxyvinyltransferase of Chlamydia pneumoniae (Chlamydophila pneumoniae).